A 24-amino-acid polypeptide reads, in one-letter code: Conotoxin PIVF (24 aa).

3 disulfide bridges follow: C2–C10, C3–C15, and C13–C19. K24 carries the post-translational modification Lysine amide.

This sequence belongs to the conotoxin A superfamily. In terms of tissue distribution, expressed by the venom duct.

The protein resides in the secreted. Its function is as follows. Probable neurotoxin with ion channel inhibitor activity. In vivo, elicits dose-dependently excitatory activity upon injection into fish. Its action is slowly reversible. The sequence is that of Conotoxin PIVF from Conus purpurascens (Purple cone).